The following is a 456-amino-acid chain: Sulfoacetaldehyde dehydrogenase (456 aa).

An NAD(+)-binding site is contributed by 213–218 (GGTAAA). Catalysis depends on residues Glu233 and Cys267.

The protein belongs to the aldehyde dehydrogenase family. In terms of assembly, homotetramer.

It catalyses the reaction sulfoacetaldehyde + NAD(+) + H2O = sulfoacetate + NADH + 2 H(+). Functionally, mediates conversion of 2-sulfoacetaldehyde into sulfoacetate. The enzyme is specific for NAD; NADP is not a substrate. Part of a pathway that can utilize the amino group of taurine as a sole source of nitrogen for growth. This chain is Sulfoacetaldehyde dehydrogenase (safD), found in Neptuniibacter caesariensis.